Consider the following 204-residue polypeptide: Leucyl/phenylalanyl-tRNA--protein transferase (204 aa).

It belongs to the L/F-transferase family.

It is found in the cytoplasm. The catalysed reaction is N-terminal L-lysyl-[protein] + L-leucyl-tRNA(Leu) = N-terminal L-leucyl-L-lysyl-[protein] + tRNA(Leu) + H(+). The enzyme catalyses N-terminal L-arginyl-[protein] + L-leucyl-tRNA(Leu) = N-terminal L-leucyl-L-arginyl-[protein] + tRNA(Leu) + H(+). It carries out the reaction L-phenylalanyl-tRNA(Phe) + an N-terminal L-alpha-aminoacyl-[protein] = an N-terminal L-phenylalanyl-L-alpha-aminoacyl-[protein] + tRNA(Phe). In terms of biological role, functions in the N-end rule pathway of protein degradation where it conjugates Leu, Phe and, less efficiently, Met from aminoacyl-tRNAs to the N-termini of proteins containing an N-terminal arginine or lysine. The polypeptide is Leucyl/phenylalanyl-tRNA--protein transferase (Brucella abortus (strain 2308)).